A 187-amino-acid polypeptide reads, in one-letter code: Ribosome-recycling factor (187 aa).

The protein belongs to the RRF family.

The protein resides in the cytoplasm. Responsible for the release of ribosomes from messenger RNA at the termination of protein biosynthesis. May increase the efficiency of translation by recycling ribosomes from one round of translation to another. The polypeptide is Ribosome-recycling factor (Orientia tsutsugamushi (strain Ikeda) (Rickettsia tsutsugamushi)).